A 727-amino-acid chain; its full sequence is MPIVGNAGAGSVGAKPGSWLPEWKRIVVLLGSWTLGVRENEKGSGSRLIKWNGSGSREQKICKTTLPLFQACIKHLNSRDLLSTKVLTLALYKYILRAPQTAPHPPAAPPRTEVASSTAGRASRTKSASSTGRVSRANPASFHRPRLLRQAGLHLRRPRLSRQAGLRCHRLHLSAPSRSPTPPPNAVAPSSCSRLPRARLAIRGRRASSHSATVDTACSRRHSCDCLNRHRHLAVVATSAVAATTVAVPTACLCCGQIPLGRHRHNQAVTGRDLTVAALVLLAEVARETTGYSNGAPDPAAVVAISCCRPGSIPPSTAAAGSCRRHPAAVTARWPLAGGARSGRRDNPRRQGTGATRTGISKTYVSSVVAKTLALQELKGNIRVFCRVRPLLPNESGAVAYPKSGENLGRGIELTHNGQMYFFTFDKVFEQSTSQEDVFIEISHLVQSALDGYKVCIFAYGQTGSGKTYTMMGNPELHDQKGLIPRSLEQIFQTSQALISQGWKYKMQASMLEIYNEAICDLLATNHTTIQDGGASKYSIKHDANGNTHVSDLIIVDVLSINEVSSLLKRAAQSRSVGRTQMNEESSRSHCVFTLRFFGVNEGTDQQVQGVLNLIDLAGSERLNKSGATGDRLKETQAINKSLSCLSDVIFSIAKKEEHVPFRNSKLTYLLQPCLGGDSKTLMFVNLSPEVSSTGESICSLRFAARVNSCEIGIPRRQTQVRSLAQG.

Disordered regions lie at residues 100 to 156, 172 to 194, and 336 to 357; these read QTAP…LHLR, HLSAPSRSPTPPPNAVAPSSCSR, and LAGGARSGRRDNPRRQGTGATR. A compositionally biased stretch (polar residues) spans 114-133; the sequence is VASSTAGRASRTKSASSTGR. The 330-residue stretch at 381–710 folds into the Kinesin motor domain; the sequence is NIRVFCRVRP…LRFAARVNSC (330 aa). 461 to 468 contacts ATP; that stretch reads GQTGSGKT.

This sequence belongs to the TRAFAC class myosin-kinesin ATPase superfamily. Kinesin family. KIN-14 subfamily.

The polypeptide is Kinesin-like protein KIN-14G (Oryza sativa subsp. japonica (Rice)).